The following is a 258-amino-acid chain: Imidazole glycerol phosphate synthase subunit HisF (258 aa).

Residues Asp11 and Asp130 contribute to the active site.

Belongs to the HisA/HisF family. As to quaternary structure, heterodimer of HisH and HisF.

It localises to the cytoplasm. The catalysed reaction is 5-[(5-phospho-1-deoxy-D-ribulos-1-ylimino)methylamino]-1-(5-phospho-beta-D-ribosyl)imidazole-4-carboxamide + L-glutamine = D-erythro-1-(imidazol-4-yl)glycerol 3-phosphate + 5-amino-1-(5-phospho-beta-D-ribosyl)imidazole-4-carboxamide + L-glutamate + H(+). It functions in the pathway amino-acid biosynthesis; L-histidine biosynthesis; L-histidine from 5-phospho-alpha-D-ribose 1-diphosphate: step 5/9. Its function is as follows. IGPS catalyzes the conversion of PRFAR and glutamine to IGP, AICAR and glutamate. The HisF subunit catalyzes the cyclization activity that produces IGP and AICAR from PRFAR using the ammonia provided by the HisH subunit. This Shigella sonnei (strain Ss046) protein is Imidazole glycerol phosphate synthase subunit HisF.